Reading from the N-terminus, the 573-residue chain is ATP-dependent RNA helicase RhlB (573 aa).

Residues V9–A37 carry the Q motif motif. The Helicase ATP-binding domain maps to L40 to L220. A53–T60 is an ATP binding site. The short motif at D166–D169 is the DEAD box element. Residues R231–L393 form the Helicase C-terminal domain. A disordered region spans residues T391 to S560. Residues E402–G411 show a composition bias toward acidic residues. A compositionally biased stretch (basic and acidic residues) spans R419–R432. Residues G435–G450 are compositionally biased toward gly residues. Residues G451–P462 show a composition bias toward basic and acidic residues. Residues P484–A499 are compositionally biased toward low complexity. A compositionally biased stretch (basic residues) spans P505–G514. Residues V541–S560 show a composition bias toward low complexity.

It belongs to the DEAD box helicase family. RhlB subfamily. As to quaternary structure, component of the RNA degradosome, which is a multiprotein complex involved in RNA processing and mRNA degradation.

It localises to the cytoplasm. The enzyme catalyses ATP + H2O = ADP + phosphate + H(+). Functionally, DEAD-box RNA helicase involved in RNA degradation. Has RNA-dependent ATPase activity and unwinds double-stranded RNA. This is ATP-dependent RNA helicase RhlB from Xanthomonas euvesicatoria pv. vesicatoria (strain 85-10) (Xanthomonas campestris pv. vesicatoria).